The sequence spans 201 residues: UPF0301 protein MMAR_0053 (201 aa).

The protein belongs to the UPF0301 (AlgH) family.

This chain is UPF0301 protein MMAR_0053, found in Mycobacterium marinum (strain ATCC BAA-535 / M).